The sequence spans 493 residues: D-aminoacyl-tRNA deacylase (493 aa).

Basic and acidic residues predominate over residues 22–37 (DLGDWERRDDPSRPDA). Disordered regions lie at residues 22 to 44 (DLGDWERRDDPSRPDADGGGTYY) and 441 to 493 (PEGP…EPSE).

It belongs to the DtdA deacylase family. Monomer. Requires Zn(2+) as cofactor.

The catalysed reaction is a D-aminoacyl-tRNA + H2O = a tRNA + a D-alpha-amino acid + H(+). It carries out the reaction glycyl-tRNA(Ala) + H2O = tRNA(Ala) + glycine + H(+). Its function is as follows. D-aminoacyl-tRNA deacylase with broad substrate specificity. By recycling D-aminoacyl-tRNA to D-amino acids and free tRNA molecules, this enzyme counteracts the toxicity associated with the formation of D-aminoacyl-tRNA entities in vivo. In Halorubrum lacusprofundi (strain ATCC 49239 / DSM 5036 / JCM 8891 / ACAM 34), this protein is D-aminoacyl-tRNA deacylase.